The primary structure comprises 753 residues: Protein-lysine N-methyltransferase SMYD4 (753 aa).

112-114 (RSA) lines the S-adenosyl-L-methionine pocket. The 343-residue stretch at 186–528 (DGVSVYFSSD…AGQEILHCYG (343 aa)) folds into the SET domain. Zn(2+)-binding residues include C246, C249, C259, C262, C268, C272, H281, and C285. An MYND-type zinc finger spans residues 246–285 (CHHCLSQSLSFVPCPKCSYARYCGESCQKDAWDQWHQWEC). S-adenosyl-L-methionine-binding positions include 467–468 (NH) and Y527.

The protein belongs to the class V-like SAM-binding methyltransferase superfamily.

It localises to the nucleus. The protein resides in the cytoplasm. The enzyme catalyses L-lysyl-[protein] + S-adenosyl-L-methionine = N(6)-methyl-L-lysyl-[protein] + S-adenosyl-L-homocysteine + H(+). Its function is as follows. Protein-lysine N-methyltransferase. Monomethylates PRMT5, modulating its transcriptional activity. May also act as a histone methyltransferase. Plays a critical role in cardiac development. Acts as a key epigenetic regulator of gene expression during cardiac development via its dual activities as a methyltransferase and negative regulator of HDAC1. The chain is Protein-lysine N-methyltransferase SMYD4 (smyd4) from Danio rerio (Zebrafish).